We begin with the raw amino-acid sequence, 89 residues long: UPF0237 protein lin0537 (89 aa).

Residues 4–78 (VLTVIGKDNV…EELQVKIHIQ (75 aa)) enclose the ACT domain.

This sequence belongs to the UPF0237 family.

The chain is UPF0237 protein lin0537 from Listeria innocua serovar 6a (strain ATCC BAA-680 / CLIP 11262).